The sequence spans 334 residues: GTP 3',8-cyclase (334 aa).

The Radical SAM core domain occupies 11–235 (GFNRKVDYLR…VESAESSQGP (225 aa)). Arg20 contacts GTP. [4Fe-4S] cluster contacts are provided by Cys27 and Cys31. Residue Tyr33 participates in S-adenosyl-L-methionine binding. Residue Cys34 participates in [4Fe-4S] cluster binding. Arg69 is a GTP binding site. Gly73 contributes to the S-adenosyl-L-methionine binding site. Thr100 is a binding site for GTP. Ser124 serves as a coordination point for S-adenosyl-L-methionine. Lys161 contributes to the GTP binding site. Met195 contacts S-adenosyl-L-methionine. Residues Cys260 and Cys263 each contribute to the [4Fe-4S] cluster site. 265–267 (RVR) contributes to the GTP binding site. Cys277 contacts [4Fe-4S] cluster.

It belongs to the radical SAM superfamily. MoaA family. In terms of assembly, monomer and homodimer. Requires [4Fe-4S] cluster as cofactor.

The enzyme catalyses GTP + AH2 + S-adenosyl-L-methionine = (8S)-3',8-cyclo-7,8-dihydroguanosine 5'-triphosphate + 5'-deoxyadenosine + L-methionine + A + H(+). It participates in cofactor biosynthesis; molybdopterin biosynthesis. Its function is as follows. Catalyzes the cyclization of GTP to (8S)-3',8-cyclo-7,8-dihydroguanosine 5'-triphosphate. In Pseudomonas entomophila (strain L48), this protein is GTP 3',8-cyclase.